A 418-amino-acid polypeptide reads, in one-letter code: Serine hydroxymethyltransferase (418 aa).

(6S)-5,6,7,8-tetrahydrofolate contacts are provided by residues Leu120 and 124–126 (GHL). Lys229 bears the N6-(pyridoxal phosphate)lysine mark.

The protein belongs to the SHMT family. As to quaternary structure, homodimer. Requires pyridoxal 5'-phosphate as cofactor.

The protein localises to the cytoplasm. The catalysed reaction is (6R)-5,10-methylene-5,6,7,8-tetrahydrofolate + glycine + H2O = (6S)-5,6,7,8-tetrahydrofolate + L-serine. The protein operates within one-carbon metabolism; tetrahydrofolate interconversion. Its pathway is amino-acid biosynthesis; glycine biosynthesis; glycine from L-serine: step 1/1. In terms of biological role, catalyzes the reversible interconversion of serine and glycine with tetrahydrofolate (THF) serving as the one-carbon carrier. This reaction serves as the major source of one-carbon groups required for the biosynthesis of purines, thymidylate, methionine, and other important biomolecules. Also exhibits THF-independent aldolase activity toward beta-hydroxyamino acids, producing glycine and aldehydes, via a retro-aldol mechanism. The protein is Serine hydroxymethyltransferase of Myxococcus xanthus (strain DK1622).